The following is a 264-amino-acid chain: Thymidylate synthase (264 aa).

Residue Arg-21 participates in dUMP binding. Position 51 (His-51) interacts with (6R)-5,10-methylene-5,6,7,8-tetrahydrofolate. 126-127 (RR) serves as a coordination point for dUMP. Catalysis depends on Cys-146, which acts as the Nucleophile. DUMP is bound by residues 166–169 (RSAD), Asn-177, and 207–209 (HLY). Asp-169 contributes to the (6R)-5,10-methylene-5,6,7,8-tetrahydrofolate binding site. Ala-263 lines the (6R)-5,10-methylene-5,6,7,8-tetrahydrofolate pocket.

This sequence belongs to the thymidylate synthase family. Bacterial-type ThyA subfamily. In terms of assembly, homodimer.

It is found in the cytoplasm. It carries out the reaction dUMP + (6R)-5,10-methylene-5,6,7,8-tetrahydrofolate = 7,8-dihydrofolate + dTMP. It participates in pyrimidine metabolism; dTTP biosynthesis. Functionally, catalyzes the reductive methylation of 2'-deoxyuridine-5'-monophosphate (dUMP) to 2'-deoxythymidine-5'-monophosphate (dTMP) while utilizing 5,10-methylenetetrahydrofolate (mTHF) as the methyl donor and reductant in the reaction, yielding dihydrofolate (DHF) as a by-product. This enzymatic reaction provides an intracellular de novo source of dTMP, an essential precursor for DNA biosynthesis. In Methylorubrum extorquens (strain CM4 / NCIMB 13688) (Methylobacterium extorquens), this protein is Thymidylate synthase.